The following is a 42-amino-acid chain: Gastric inhibitory polypeptide (42 aa).

This sequence belongs to the glucagon family.

It is found in the secreted. In terms of biological role, potent stimulator of insulin secretion and relatively poor inhibitor of gastric acid secretion. This Bos taurus (Bovine) protein is Gastric inhibitory polypeptide (GIP).